The primary structure comprises 361 residues: Microtubule-associated protein Jupiter (361 aa).

Over residues 1–15 (MISNYDITDSKSSSK) the composition is skewed to polar residues. Disordered stretches follow at residues 1–38 (MISN…TPRN) and 70–99 (IGDN…TPGK). At S24 the chain carries Phosphoserine. T35 carries the post-translational modification Phosphothreonine. A compositionally biased stretch (basic and acidic residues) spans 73–87 (NPRRGQKPVDSHSRL). A Phosphothreonine modification is found at T96. S105 is modified (phosphoserine). Low complexity-rich tracts occupy residues 125–134 (GSSTANTTNG) and 141–154 (SGSV…VSSS). 2 disordered regions span residues 125 to 165 (GSST…SGSR) and 328 to 361 (GSTN…SGLW). Residues S143 and S154 each carry the phosphoserine modification. Residues 155 to 165 (TENLKMNSGSR) are compositionally biased toward polar residues.

This sequence belongs to the MAP Jupiter family.

The protein resides in the nucleus. It is found in the cytoplasm. Its subcellular location is the cytoskeleton. It localises to the spindle. Its function is as follows. Binds to all microtubule populations. The sequence is that of Microtubule-associated protein Jupiter from Drosophila persimilis (Fruit fly).